A 1135-amino-acid polypeptide reads, in one-letter code: Receptor-type guanylate cyclase gcy-4 (1135 aa).

The N-terminal stretch at 1 to 20 (MTQLLRFLLILSIFCDFSHS) is a signal peptide. Residues 21 to 483 (QRPTIRVGIA…CPIPFFDQYR (463 aa)) are Extracellular-facing. 9 N-linked (GlcNAc...) asparagine glycosylation sites follow: N37, N193, N209, N251, N349, N375, N431, N436, and N447. A helical transmembrane segment spans residues 484–504 (LLIFVFVIVAGLLILAIFTCL). At 505–1135 (TSMVRNQRAE…VMRREMMRVS (631 aa)) the chain is on the cytoplasmic side. A disordered region spans residues 535–560 (KGRRLSTDSENSTVTKSSKGSSSKNF). The Protein kinase domain maps to 545-837 (NSTVTKSSKG…KDNLMDHVFS (293 aa)). Positions 546-560 (STVTKSSKGSSSKNF) are enriched in low complexity. The Guanylate cyclase domain maps to 895-1025 (TVFFSDLVKF…DTVNTASRME (131 aa)).

It belongs to the adenylyl cyclase class-4/guanylyl cyclase family. In terms of tissue distribution, expressed bilaterally in ASE neurons.

The protein localises to the cell membrane. It catalyses the reaction GTP = 3',5'-cyclic GMP + diphosphate. Functionally, guanylate cyclase involved in the production of the second messenger cGMP. Regulates chemotaxis responses toward salt ions in ASE sensory neurons. In Caenorhabditis briggsae, this protein is Receptor-type guanylate cyclase gcy-4.